The chain runs to 224 residues: A-type ATP synthase subunit D (224 aa).

Basic and acidic residues predominate over residues 200–209 (KKVKDKKEAQ). The segment at 200-224 (KKVKDKKEAQEEAADEAAAAESTGA) is disordered. The segment covering 215-224 (EAAAAESTGA) has biased composition (low complexity).

This sequence belongs to the V-ATPase D subunit family. Has multiple subunits with at least A(3), B(3), C, D, E, F, H, I and proteolipid K(x).

The protein localises to the cell membrane. In terms of biological role, component of the A-type ATP synthase that produces ATP from ADP in the presence of a proton gradient across the membrane. This is A-type ATP synthase subunit D from Halobacterium salinarum (strain ATCC 29341 / DSM 671 / R1).